A 326-amino-acid polypeptide reads, in one-letter code: Transposase InsH for insertion sequence element IS5A (326 aa).

Belongs to the transposase 11 family.

Involved in the transposition of the insertion sequence IS5. This Escherichia coli (strain K12) protein is Transposase InsH for insertion sequence element IS5A (insH1).